The following is a 206-amino-acid chain: MIVVILVCIFLANGIKATAVQNDLHEHPVLTWDLLQHFIGHTLYITTHQVLALPLGSRVECEGIEGFNCTWPGFQDPAHDHIDFYFDLSNPFYSFVDNFYIVSEGNQRINLRLVGAVPKQKRLNVGCHTSFAVDLPFGIQIYHDRDFQHPVDGRHLDCTHRVYFVKYCPHNLHGYCFNERLKVYDLKQFRSKKVFDKINQHHKTEL.

Positions 1–17 (MIVVILVCIFLANGIKA) are cleaved as a signal peptide.

In Feline coronavirus (strain FIPV WSU-79/1146) (FCoV), this protein is Non-structural protein 7b.